A 293-amino-acid polypeptide reads, in one-letter code: ATP synthase gamma chain (293 aa).

It belongs to the ATPase gamma chain family. F-type ATPases have 2 components, CF(1) - the catalytic core - and CF(0) - the membrane proton channel. CF(1) has five subunits: alpha(3), beta(3), gamma(1), delta(1), epsilon(1). CF(0) has three main subunits: a, b and c.

The protein localises to the cell inner membrane. Its function is as follows. Produces ATP from ADP in the presence of a proton gradient across the membrane. The gamma chain is believed to be important in regulating ATPase activity and the flow of protons through the CF(0) complex. The chain is ATP synthase gamma chain from Chlorobium chlorochromatii (strain CaD3).